We begin with the raw amino-acid sequence, 204 residues long: MIAFLSGHLVAIEWGERSSLTVEVQGIGYRVKAPGRFLKQLPAVGEPVRVFTHLVVRETELVLYGFGSPAERDLFVELIKVSGVGPALGLALLNTFGLPELVQAVVTENVRLLSLTPGVGHKTAQRLALELKTKLAHWRQGMGVADQPLAGGPPMPIREEVEMALLALGYSTQEIQAALQALPTHPRPTEDWLRDAITYLSQQP.

A domain I region spans residues 1-67 (MIAFLSGHLV…ETELVLYGFG (67 aa)). The interval 68–146 (SPAERDLFVE…HWRQGMGVAD (79 aa)) is domain II. Positions 147 to 157 (QPLAGGPPMPI) are flexible linker. The interval 157 to 204 (IREEVEMALLALGYSTQEIQAALQALPTHPRPTEDWLRDAITYLSQQP) is domain III.

This sequence belongs to the RuvA family. Homotetramer. Forms an RuvA(8)-RuvB(12)-Holliday junction (HJ) complex. HJ DNA is sandwiched between 2 RuvA tetramers; dsDNA enters through RuvA and exits via RuvB. An RuvB hexamer assembles on each DNA strand where it exits the tetramer. Each RuvB hexamer is contacted by two RuvA subunits (via domain III) on 2 adjacent RuvB subunits; this complex drives branch migration. In the full resolvosome a probable DNA-RuvA(4)-RuvB(12)-RuvC(2) complex forms which resolves the HJ.

The protein localises to the cytoplasm. Its function is as follows. The RuvA-RuvB-RuvC complex processes Holliday junction (HJ) DNA during genetic recombination and DNA repair, while the RuvA-RuvB complex plays an important role in the rescue of blocked DNA replication forks via replication fork reversal (RFR). RuvA specifically binds to HJ cruciform DNA, conferring on it an open structure. The RuvB hexamer acts as an ATP-dependent pump, pulling dsDNA into and through the RuvAB complex. HJ branch migration allows RuvC to scan DNA until it finds its consensus sequence, where it cleaves and resolves the cruciform DNA. The chain is Holliday junction branch migration complex subunit RuvA from Synechococcus sp. (strain JA-2-3B'a(2-13)) (Cyanobacteria bacterium Yellowstone B-Prime).